The following is a 139-amino-acid chain: Holo-[acyl-carrier-protein] synthase (139 aa).

The Mg(2+) site is built by D8 and E61.

This sequence belongs to the P-Pant transferase superfamily. AcpS family. It depends on Mg(2+) as a cofactor.

It localises to the cytoplasm. It catalyses the reaction apo-[ACP] + CoA = holo-[ACP] + adenosine 3',5'-bisphosphate + H(+). Transfers the 4'-phosphopantetheine moiety from coenzyme A to a Ser of acyl-carrier-protein. The protein is Holo-[acyl-carrier-protein] synthase of Rhodopseudomonas palustris (strain BisB5).